Consider the following 679-residue polypeptide: Penicillin-binding protein PbpB (679 aa).

The interval 1 to 74 is disordered; sequence MSRAAPRRAS…STRARRTRQV (74 aa). Residues 1-90 are Cytoplasmic-facing; that stretch reads MSRAAPRRAS…GASFVFRHRT (90 aa). A compositionally biased stretch (polar residues) spans 42–54; that stretch reads ARQAQEATKSRPA. Residues 91–111 form a helical membrane-spanning segment; sequence GNAVILVLMLVAATQLFFLQV. The Extracellular portion of the chain corresponds to 112 to 679; the sequence is SHAAGLRAQA…PGPPLVLQAT (568 aa). Serine 386 serves as the catalytic Acyl-ester intermediate.

Belongs to the transpeptidase family. Interacts with Wag31. Cleaved by Rip1 in response to oxidative stress (H(2)O(2)), prevented by Wag31. Cleavage probably occurs near residues 102-103.

The protein resides in the cell membrane. It participates in cell wall biogenesis; peptidoglycan biosynthesis. In terms of biological role, synthesis of cross-linked peptidoglycan from the lipid intermediates. The polypeptide is Penicillin-binding protein PbpB (pbpB) (Mycobacterium tuberculosis (strain ATCC 25618 / H37Rv)).